Here is a 512-residue protein sequence, read N- to C-terminus: Maturase K (512 aa).

The protein belongs to the intron maturase 2 family. MatK subfamily.

It localises to the plastid. It is found in the chloroplast. Usually encoded in the trnK tRNA gene intron. Probably assists in splicing its own and other chloroplast group II introns. The chain is Maturase K from Lilium tsingtauense (Twilight lily).